The sequence spans 234 residues: Synaptogyrin-4 (234 aa).

The MARVEL domain occupies 18-169; sequence FLRRPKTITR…QAYLAFQDLR (152 aa). 4 helical membrane passes run 25-45, 66-86, 104-124, and 145-165; these read ITRV…LTDG, CSFA…FLVL, LLDF…FCFL, and AAIA…YLAF.

The protein belongs to the synaptogyrin family.

It localises to the membrane. The polypeptide is Synaptogyrin-4 (SYNGR4) (Homo sapiens (Human)).